Reading from the N-terminus, the 285-residue chain is Putative phosphatase MG125 (285 aa).

Residue D8 is the Nucleophile of the active site. D8 contacts Mg(2+). L9 lines the phosphate pocket. D10 is a binding site for Mg(2+). Residues 44-45 (TG) and K205 contribute to the phosphate site. The Mg(2+) site is built by D228 and S229. N231 is a phosphate binding site.

Belongs to the HAD-like hydrolase superfamily. Cof family. Mg(2+) serves as cofactor.

This Mycoplasma genitalium (strain ATCC 33530 / DSM 19775 / NCTC 10195 / G37) (Mycoplasmoides genitalium) protein is Putative phosphatase MG125.